A 131-amino-acid polypeptide reads, in one-letter code: Translation initiation factor 5A (131 aa).

Residue Lys36 is modified to Hypusine.

The protein belongs to the eIF-5A family.

The protein resides in the cytoplasm. Functions by promoting the formation of the first peptide bond. This chain is Translation initiation factor 5A, found in Saccharolobus solfataricus (strain ATCC 35092 / DSM 1617 / JCM 11322 / P2) (Sulfolobus solfataricus).